Reading from the N-terminus, the 306-residue chain is Elongation factor Ts (306 aa).

The tract at residues Thr80 to Val83 is involved in Mg(2+) ion dislocation from EF-Tu.

The protein belongs to the EF-Ts family.

It localises to the cytoplasm. In terms of biological role, associates with the EF-Tu.GDP complex and induces the exchange of GDP to GTP. It remains bound to the aminoacyl-tRNA.EF-Tu.GTP complex up to the GTP hydrolysis stage on the ribosome. The sequence is that of Elongation factor Ts from Clostridium kluyveri (strain NBRC 12016).